The following is a 149-amino-acid chain: D-aminoacyl-tRNA deacylase (149 aa).

Positions 137–138 (GP) match the Gly-cisPro motif, important for rejection of L-amino acids motif.

This sequence belongs to the DTD family. As to quaternary structure, homodimer.

It is found in the cytoplasm. It catalyses the reaction glycyl-tRNA(Ala) + H2O = tRNA(Ala) + glycine + H(+). It carries out the reaction a D-aminoacyl-tRNA + H2O = a tRNA + a D-alpha-amino acid + H(+). Its function is as follows. An aminoacyl-tRNA editing enzyme that deacylates mischarged D-aminoacyl-tRNAs. Also deacylates mischarged glycyl-tRNA(Ala), protecting cells against glycine mischarging by AlaRS. Acts via tRNA-based rather than protein-based catalysis; rejects L-amino acids rather than detecting D-amino acids in the active site. By recycling D-aminoacyl-tRNA to D-amino acids and free tRNA molecules, this enzyme counteracts the toxicity associated with the formation of D-aminoacyl-tRNA entities in vivo and helps enforce protein L-homochirality. This chain is D-aminoacyl-tRNA deacylase, found in Syntrophomonas wolfei subsp. wolfei (strain DSM 2245B / Goettingen).